The primary structure comprises 637 residues: Chaperone protein HtpG (637 aa).

The segment at 1 to 345 (MTAAQKETLG…SNDLPLNVSR (345 aa)) is a; substrate-binding. Residues 346 to 562 (EILQDNKVTQ…DNDMSSQMQK (217 aa)) are b. Positions 563–637 (LMESVGQAAP…LNKLMLELSK (75 aa)) are c.

Belongs to the heat shock protein 90 family. Homodimer.

The protein localises to the cytoplasm. Functionally, molecular chaperone. Has ATPase activity. The chain is Chaperone protein HtpG from Pseudoalteromonas translucida (strain TAC 125).